The chain runs to 412 residues: Serine--tRNA ligase (412 aa).

228–230 (TAE) contributes to the L-serine binding site. Residue 259-261 (RKE) participates in ATP binding. L-serine is bound at residue Glu-282. An ATP-binding site is contributed by 346–349 (EISS). Ser-380 contributes to the L-serine binding site.

Belongs to the class-II aminoacyl-tRNA synthetase family. Type-1 seryl-tRNA synthetase subfamily. In terms of assembly, homodimer. The tRNA molecule binds across the dimer.

The protein localises to the cytoplasm. The enzyme catalyses tRNA(Ser) + L-serine + ATP = L-seryl-tRNA(Ser) + AMP + diphosphate + H(+). It catalyses the reaction tRNA(Sec) + L-serine + ATP = L-seryl-tRNA(Sec) + AMP + diphosphate + H(+). The protein operates within aminoacyl-tRNA biosynthesis; selenocysteinyl-tRNA(Sec) biosynthesis; L-seryl-tRNA(Sec) from L-serine and tRNA(Sec): step 1/1. Functionally, catalyzes the attachment of serine to tRNA(Ser). Is also able to aminoacylate tRNA(Sec) with serine, to form the misacylated tRNA L-seryl-tRNA(Sec), which will be further converted into selenocysteinyl-tRNA(Sec). The protein is Serine--tRNA ligase of Aliarcobacter butzleri (strain RM4018) (Arcobacter butzleri).